The sequence spans 282 residues: MKNKKDKTQKPKVIDEKFVAFFKSLNIEPQNWQFYEDAFVHSSYVNENEDARASYDRLEFLGDALIDFIVAKKLFELYPNYNEGMLTRTKIEIVKGENLNRIGKELNFGNFIKLGKGMPYTETLFGDVLEALVAAIYEDLGIEKANQFVEEHIFKKTYSEILKYNFFSLFQEQKLPEPRVRVSLTSNNLVLSIIELNGDIIWSQAVPNSKHYDDKSVLEHNAMSAFTQFLKSGKGINFFSDIKNKLDSQKPMRALTVRPKKINWKARKPKLKALKNKVKADS.

The RNase III domain maps to 18–141 (FVAFFKSLNI…LVAAIYEDLG (124 aa)). Glu59 contributes to the Mg(2+) binding site. The active site involves Asp63. Residues Asp127 and Glu130 each coordinate Mg(2+). Glu130 is an active-site residue.

It belongs to the ribonuclease III family. Homodimer. The cofactor is Mg(2+).

The protein localises to the cytoplasm. It carries out the reaction Endonucleolytic cleavage to 5'-phosphomonoester.. Its function is as follows. Digests double-stranded RNA. Involved in the processing of primary rRNA transcript to yield the immediate precursors to the large and small rRNAs (23S and 16S). Processes some mRNAs, and tRNAs when they are encoded in the rRNA operon. Processes pre-crRNA and tracrRNA of type II CRISPR loci if present in the organism. The protein is Ribonuclease 3 of Mycoplasmoides pneumoniae (strain ATCC 15531 / DSM 23978 / CIP 103766 / NBRC 14401 / NCTC 10119 / FH) (Mycoplasma pneumoniae).